A 132-amino-acid polypeptide reads, in one-letter code: Acid shock protein (132 aa).

An N-terminal signal peptide occupies residues 1–21 (MKKVLALIVAATMGLSSVAFA). A propeptide spanning residues 22–69 (AETTAAATAAPAATSTTAAPAVEKAAPAKATHHKKHKATKQTTEQKAQ) is cleaved from the precursor. Over residues 30 to 50 (AAPAATSTTAAPAVEKAAPAK) the composition is skewed to low complexity. The segment at 30-132 (AAPAATSTTA…AKKSATAPAA (103 aa)) is disordered. Residues 51–60 (ATHHKKHKAT) show a composition bias toward basic residues. Residues 61 to 99 (KQTTEQKAQAAKKAVKKAPAQKAQAAKKAVKKAPVQKAQ) show a composition bias toward low complexity. A compositionally biased stretch (basic residues) spans 100–124 (AAKKHVKKAPAQKAQAAKKHHKTAK).

The protein belongs to the Asr family. In terms of processing, proteolytic processing gives rise to the active protein.

It is found in the periplasm. Its function is as follows. Required for growth and/or survival at acidic conditions. The polypeptide is Acid shock protein (Yersinia enterocolitica serotype O:8 / biotype 1B (strain NCTC 13174 / 8081)).